The sequence spans 515 residues: Gamma aminobutyrate transaminase 1, mitochondrial (515 aa).

Residues 1 to 57 (MAKISRLFGSTVKAAITAQAGFHGKRIPAVSSLQEHIVKSTPARYNSTQACLENDIS) constitute a mitochondrion transit peptide. 172 to 173 (GS) contacts pyridoxal 5'-phosphate. Tyr205 serves as a coordination point for substrate. Position 312 (Asp312) interacts with pyridoxal 5'-phosphate. Lys341 serves as a coordination point for substrate. Lys341 is modified (N6-(pyridoxal phosphate)lysine).

It belongs to the class-III pyridoxal-phosphate-dependent aminotransferase family. Expressed in leaves, roots, stems, flowers and fruits.

It is found in the mitochondrion. The enzyme catalyses 4-aminobutanoate + pyruvate = succinate semialdehyde + L-alanine. It catalyses the reaction 4-aminobutanoate + glyoxylate = succinate semialdehyde + glycine. In terms of biological role, transaminase that degrades gamma-amino butyric acid (GABA) and uses pyruvate or glyoxylate as amino-group acceptor. Cannot use beta-alanine, ornithine, acetylornithine, serine, glycine, asparagine, glutamine, glutamate, valine, leucine, isoleucine, methionine, phenylalanine, histidine, lysine, arginine, aspartate, threonine, tyrosine, tryptophan, proline, or cysteine as amino donors. Acts predominantly in vegetative tissues. This is Gamma aminobutyrate transaminase 1, mitochondrial (GABA-TP1) from Solanum lycopersicum (Tomato).